Here is a 79-residue protein sequence, read N- to C-terminus: uncharacterized protein (79 aa).

Residues 1–33 (MRFIIRTVMLIALVWIGLLLSGYGVLIGSKENA) form the signal peptide.

This is an uncharacterized protein from Escherichia coli O157:H7.